The sequence spans 179 residues: Putative endogenous retrovirus group FC1 Env polyprotein (179 aa).

An N-terminal signal peptide occupies residues 1-22 (MARPSPLCLLLLLTLLPPIVPS). A truncated surface protein region spans residues 23-179 (NSLLTEPPFR…SKLRIFRTYV (157 aa)). A glycan (N-linked (GlcNAc...) asparagine) is linked at Asn69.

Belongs to the gamma type-C retroviral envelope protein family. HERV class-I F(c)1 env subfamily.

The protein localises to the virion. Functionally, retroviral envelope proteins mediate receptor recognition and membrane fusion during early infection. Endogenous envelope proteins may have kept, lost or modified their original function during evolution. The sequence is that of Putative endogenous retrovirus group FC1 Env polyprotein (ERVFC1) from Gorilla gorilla gorilla (Western lowland gorilla).